Reading from the N-terminus, the 1857-residue chain is Fer-1-like protein 6 (1857 aa).

At 1–1824 (MFGLKVKKKR…YLIWKNYKKY (1824 aa)) the chain is on the cytoplasmic side. The interval 15 to 63 (KGLILANKAAKDSQGDTEALQEEPSHQEGPRGDLVHDDASIFPVPSASP) is disordered. Residues 37 to 53 (EPSHQEGPRGDLVHDDA) show a composition bias toward basic and acidic residues. C2 domains follow at residues 65-181 (RRSK…QFCN) and 225-356 (PIEK…DKGF). Residues 426–447 (SKDKDSKSSKGKDKADKTEDGK) show a composition bias toward basic and acidic residues. Positions 426-469 (SKDKDSKSSKGKDKADKTEDGKSQQASNKTNSTEVEVESFDVPP) are disordered. Polar residues predominate over residues 448-459 (SQQASNKTNSTE). 2 consecutive C2 domains span residues 810–937 (GTNH…RLCY) and 969–1099 (PVEP…LAPI). The Ca(2+) site is built by D842, D848, D904, and D906. Disordered stretches follow at residues 1101-1148 (QVDG…VVPD), 1161-1203 (PDSS…RTIA), and 1224-1246 (AQKA…PDEV). Positions 1113 to 1129 (DSLTATESSGAHSSSQD) are enriched in polar residues. Residues 1178-1189 (PPKDGKPKDPRK) are compositionally biased toward basic and acidic residues. Residues 1190-1200 (PSRRSTKRRKR) are compositionally biased toward basic residues. The span at 1226 to 1245 (KAKERNPKGKKGNTEAKPDE) shows a compositional bias: basic and acidic residues. C2 domains are found at residues 1338–1457 (DSGQ…AICG) and 1578–1729 (DMPQ…KACD). Ca(2+)-binding residues include D1372, D1378, D1427, D1429, and D1435. The chain crosses the membrane as a helical span at residues 1825–1845 (IIIAFILIILIIFLVLFIYTL). At 1846–1857 (PGAISRRIVVGS) the chain is on the extracellular side.

Belongs to the ferlin family. Ca(2+) is required as a cofactor.

It is found in the membrane. The sequence is that of Fer-1-like protein 6 (FER1L6) from Homo sapiens (Human).